The primary structure comprises 247 residues: 5'-nucleotidase SurE (247 aa).

4 residues coordinate a divalent metal cation: Asp-8, Asp-9, Ser-39, and Asn-91.

It belongs to the SurE nucleotidase family. It depends on a divalent metal cation as a cofactor.

It localises to the cytoplasm. It catalyses the reaction a ribonucleoside 5'-phosphate + H2O = a ribonucleoside + phosphate. Its function is as follows. Nucleotidase that shows phosphatase activity on nucleoside 5'-monophosphates. In Leptospira biflexa serovar Patoc (strain Patoc 1 / Ames), this protein is 5'-nucleotidase SurE.